A 401-amino-acid chain; its full sequence is Nodal homolog 3-A (401 aa).

A signal peptide spans 1–18 (MAFLNLFFCLVFISPLMA). Residues 19–274 (MPPVLQGRKS…KVNGFRRLRR (256 aa)) constitute a propeptide that is removed on maturation. N-linked (GlcNAc...) asparagine glycosylation is found at asparagine 168, asparagine 337, asparagine 341, and asparagine 344. 2 disulfides stabilise this stretch: cysteine 299-cysteine 365 and cysteine 328-cysteine 396.

This sequence belongs to the TGF-beta family. Monomer. The propeptide region interacts with bmp4 in a non-covalent manner. In terms of tissue distribution, expressed in the epithelial layer of the Spemann organizer during gastrulation.

It localises to the secreted. Its function is as follows. Exhibits mesoderm-dorsalizing activity and neural-inducing activity, but lacks mesoderm-inducing activity. Regulates the expression of specific mesodermal and neural genes. Induces convergent extension movements at the embryonic midline by activating the fgf signaling pathway to induce t/bra expression in the organizer region. Acts with wnt11 to induce Spemann organizer cells and induce axis formation. The unprocessed protein antagonizes bmp-signaling. In Xenopus laevis (African clawed frog), this protein is Nodal homolog 3-A (nodal3-a).